Here is a 302-residue protein sequence, read N- to C-terminus: Sulfate adenylyltransferase subunit 2 (302 aa).

It belongs to the PAPS reductase family. CysD subfamily. Heterodimer composed of CysD, the smaller subunit, and CysN.

It catalyses the reaction sulfate + ATP + H(+) = adenosine 5'-phosphosulfate + diphosphate. It participates in sulfur metabolism; hydrogen sulfide biosynthesis; sulfite from sulfate: step 1/3. Its function is as follows. With CysN forms the ATP sulfurylase (ATPS) that catalyzes the adenylation of sulfate producing adenosine 5'-phosphosulfate (APS) and diphosphate, the first enzymatic step in sulfur assimilation pathway. APS synthesis involves the formation of a high-energy phosphoric-sulfuric acid anhydride bond driven by GTP hydrolysis by CysN coupled to ATP hydrolysis by CysD. This Enterobacter sp. (strain 638) protein is Sulfate adenylyltransferase subunit 2.